A 216-amino-acid polypeptide reads, in one-letter code: Phosphoenolpyruvate guanylyltransferase (216 aa).

Thr-143, Gly-159, and Ser-162 together coordinate phosphoenolpyruvate.

This sequence belongs to the CofC family.

It catalyses the reaction phosphoenolpyruvate + GTP + H(+) = enolpyruvoyl-2-diphospho-5'-guanosine + diphosphate. It participates in cofactor biosynthesis; coenzyme F420 biosynthesis. Guanylyltransferase that catalyzes the activation of phosphoenolpyruvate (PEP) as enolpyruvoyl-2-diphospho-5'-guanosine, via the condensation of PEP with GTP. It is involved in the biosynthesis of coenzyme F420, a hydride carrier cofactor. This Streptomyces scabiei (strain 87.22) protein is Phosphoenolpyruvate guanylyltransferase.